The sequence spans 156 residues: AP-1 complex subunit sigma-1 (156 aa).

It belongs to the adaptor complexes small subunit family. Adapter protein complex 1 (AP-1) is a heterotetramer composed of two large adaptins (gamma-type subunit APL4 and beta-type subunit APL2), a medium adaptin (mu-type subunit APM1) and a small adaptin (sigma-type subunit APS1). AP-1 interacts with clathrin. Also a component of the AP-1R complex composed of at least APM2, APL4 and APS1.

The protein resides in the cytoplasm. It is found in the nucleus. It localises to the cytoplasmic vesicle. Its subcellular location is the clathrin-coated vesicle membrane. The protein localises to the endosome. The protein resides in the golgi apparatus. In terms of biological role, component of the adapter complexes which link clathrin to receptors in coated vesicles. Clathrin-associated protein complexes are believed to interact with the cytoplasmic tails of membrane proteins, leading to their selection and concentration. AP19 is probably a subunit of the Golgi membrane adapter. Component of the AP-1-related (AP-1R) complex, an adapter protein complex that mediates sorting of cargo SNARE SNC1. In contrast to the APM1-containing AP-1 complex, AP-1R is incapable of sorting CHS3. This Saccharomyces cerevisiae (strain ATCC 204508 / S288c) (Baker's yeast) protein is AP-1 complex subunit sigma-1 (APS1).